A 937-amino-acid polypeptide reads, in one-letter code: Leucine--tRNA ligase (937 aa).

A 'HIGH' region motif is present at residues 34 to 44; it reads PYPSGAMHIGH. Residues 609 to 613 carry the 'KMSKS' region motif; it reads KMSSS.

This sequence belongs to the class-I aminoacyl-tRNA synthetase family.

It localises to the cytoplasm. It catalyses the reaction tRNA(Leu) + L-leucine + ATP = L-leucyl-tRNA(Leu) + AMP + diphosphate. This is Leucine--tRNA ligase from Methanothermobacter thermautotrophicus (strain ATCC 29096 / DSM 1053 / JCM 10044 / NBRC 100330 / Delta H) (Methanobacterium thermoautotrophicum).